A 561-amino-acid polypeptide reads, in one-letter code: MSSGKYRQQEIRAPRGTTLTAKSWLTEAPLRMLMNNLDPEVAENPNELVVYGGIGRAARNWECYDAIVDSLTHLESDETLLVQSGKPVGVFKTHENAPRVLIANSNLVPHWATWEHFNELDAKGLAMYGQMTAGSWIYIGSQGIVQGTYETFVEAGRQHYNGSLKGRWVLTAGLGGMGGAQPLAATLAGACSLNIECQQSRIDFRLRTRYVDEQADNLDDALARINKYTSQGKTVSIALCGNAADIVPELVARGVRPDLVTDQTSAHDPLHGYLPTGWSWEEYQQKAKTDPEGTVLAAKKSMAEHVRAMLAFSDMGVPTFDYGNNIRQMAKEIGVENAFDFPGFVPAYIRPLFCRGIGPFRWVALSGDPQDIYKTDAKVKEIVADDAHLHHWLDMARERINFQGLPARICWVGLEWRQKLGLAFNEMVRSGEVSAPIVIGRDHLDSGSVASPNRETEAMQDGSDAVSDWPLLNALLNTASGATWVSLHHGGGVGMGFSQHAGMVIVCDGTDEAAARIARVLHNDPATGVMRHADAGYDIAIDCAKEQGLNLPMIAATQGKH.

Residues 52-53 (GG), glutamine 130, 176-178 (GMG), glutamate 196, arginine 201, 242-243 (NA), 263-267 (QTSAH), 273-274 (YL), and tyrosine 322 contribute to the NAD(+) site. Residue cysteine 410 is part of the active site. Residue glycine 492 participates in NAD(+) binding.

Belongs to the urocanase family. It depends on NAD(+) as a cofactor.

It localises to the cytoplasm. It catalyses the reaction 4-imidazolone-5-propanoate = trans-urocanate + H2O. The protein operates within amino-acid degradation; L-histidine degradation into L-glutamate; N-formimidoyl-L-glutamate from L-histidine: step 2/3. Functionally, catalyzes the conversion of urocanate to 4-imidazolone-5-propionate. This Enterobacter sp. (strain 638) protein is Urocanate hydratase.